The sequence spans 405 residues: Aspartokinase (405 aa).

ACT domains follow at residues 267–344 and 345–405; these read VSME…AKVS and IVGV…QLDQ.

Belongs to the aspartokinase family.

It catalyses the reaction L-aspartate + ATP = 4-phospho-L-aspartate + ADP. It participates in amino-acid biosynthesis; L-lysine biosynthesis via DAP pathway; (S)-tetrahydrodipicolinate from L-aspartate: step 1/4. The protein operates within amino-acid biosynthesis; L-methionine biosynthesis via de novo pathway; L-homoserine from L-aspartate: step 1/3. Its pathway is amino-acid biosynthesis; L-threonine biosynthesis; L-threonine from L-aspartate: step 1/5. This chain is Aspartokinase (lysC), found in Helicobacter pylori (strain ATCC 700392 / 26695) (Campylobacter pylori).